We begin with the raw amino-acid sequence, 142 residues long: Large ribosomal subunit protein uL13 (142 aa).

It belongs to the universal ribosomal protein uL13 family. As to quaternary structure, part of the 50S ribosomal subunit.

In terms of biological role, this protein is one of the early assembly proteins of the 50S ribosomal subunit, although it is not seen to bind rRNA by itself. It is important during the early stages of 50S assembly. In Klebsiella pneumoniae (strain 342), this protein is Large ribosomal subunit protein uL13.